A 35-amino-acid polypeptide reads, in one-letter code: Photosystem II reaction center protein Y (35 aa).

At 1–4 (MDTR) the chain is on the lumenal side. Residues 5–23 (LLIVLLPIIAAASWAIYNI) traverse the membrane as a helical segment. Over 24-35 (GKILLLQLTKRS) the chain is Stromal.

This sequence belongs to the PsbY family. As to quaternary structure, PSII is composed of 1 copy each of membrane proteins PsbA, PsbB, PsbC, PsbD, PsbE, PsbF, PsbH, PsbI, PsbJ, PsbK, PsbL, PsbM, PsbT, PsbX, PsbY, PsbZ, Psb30/Ycf12, at least 3 peripheral proteins of the oxygen-evolving complex and a large number of cofactors. It forms dimeric complexes.

It localises to the plastid. The protein localises to the chloroplast thylakoid membrane. Functionally, loosely associated component of the core of photosystem II (PSII), it is not always seen in crystals. PSII is a light-driven water plastoquinone oxidoreductase, using light energy to abstract electrons from H(2)O, generating a proton gradient subsequently used for ATP formation. The sequence is that of Photosystem II reaction center protein Y from Cyanidioschyzon merolae (strain NIES-3377 / 10D) (Unicellular red alga).